The sequence spans 266 residues: Bax inhibitor 1 (266 aa).

Positions methionine 1–proline 22 are disordered. 7 helical membrane-spanning segments follow: residues leucine 70 to valine 90, methionine 92 to isoleucine 112, isoleucine 123 to phenylalanine 143, isoleucine 147 to phenylalanine 167, glycine 177 to valine 197, proline 201 to phenylalanine 221, and leucine 240 to leucine 260.

It belongs to the BI1 family. LFG subfamily.

The protein localises to the endoplasmic reticulum membrane. It localises to the mitochondrion membrane. It is found in the golgi apparatus membrane. The protein resides in the vacuole membrane. In terms of biological role, links the unfolded protein response and programmed cell death and mediates mitochondrial-dependent apoptosis. Induces cell death and disruption of the mitochondrial transmembrane potential. In Schizosaccharomyces pombe (strain 972 / ATCC 24843) (Fission yeast), this protein is Bax inhibitor 1 (bxi1).